The following is a 144-amino-acid chain: Lysozyme C II (144 aa).

Residues 1–15 (MRAVVVLLLVAVASA) form the signal peptide. A C-type lysozyme domain is found at 16–144 (KVYDRCELAR…LRSYVAGCGV (129 aa)). 4 disulfides stabilise this stretch: Cys21/Cys142, Cys45/Cys130, Cys79/Cys95, and Cys91/Cys109. Residues Glu50 and Asp67 contribute to the active site.

Its subcellular location is the secreted. The catalysed reaction is Hydrolysis of (1-&gt;4)-beta-linkages between N-acetylmuramic acid and N-acetyl-D-glucosamine residues in a peptidoglycan and between N-acetyl-D-glucosamine residues in chitodextrins.. In terms of biological role, lysozymes have primarily a bacteriolytic function; those in tissues and body fluids are associated with the monocyte-macrophage system and enhance the activity of immunoagents. Has antibacterial activity against the Gram positive bacterium P.citreus. Has no antibacterial activity against the Gram negative bacteria E.coli and Y.ruckeri. Does not have hemolytic activity against trout erythrocytes. The protein is Lysozyme C II of Oncorhynchus mykiss (Rainbow trout).